The following is a 554-amino-acid chain: Arginine--tRNA ligase (554 aa).

The 'HIGH' region signature appears at 129–139 (ANPTGPLHIGH).

It belongs to the class-I aminoacyl-tRNA synthetase family. In terms of assembly, monomer.

Its subcellular location is the cytoplasm. The catalysed reaction is tRNA(Arg) + L-arginine + ATP = L-arginyl-tRNA(Arg) + AMP + diphosphate. The protein is Arginine--tRNA ligase of Geobacter sp. (strain M21).